Here is a 360-residue protein sequence, read N- to C-terminus: Alanine racemase (360 aa).

The active-site Proton acceptor; specific for D-alanine is the lysine 33. At lysine 33 the chain carries N6-(pyridoxal phosphate)lysine. Residue arginine 129 coordinates substrate. Tyrosine 253 (proton acceptor; specific for L-alanine) is an active-site residue. Position 301 (methionine 301) interacts with substrate.

Belongs to the alanine racemase family. Pyridoxal 5'-phosphate serves as cofactor.

It carries out the reaction L-alanine = D-alanine. Its pathway is amino-acid biosynthesis; D-alanine biosynthesis; D-alanine from L-alanine: step 1/1. Catalyzes the interconversion of L-alanine and D-alanine. May also act on other amino acids. The sequence is that of Alanine racemase (alr) from Xanthomonas campestris pv. campestris (strain 8004).